We begin with the raw amino-acid sequence, 777 residues long: Serine/threonine-protein kinase PLK4 (777 aa).

A Protein kinase domain is found at 14–268 (YEVQHLLGKG…LEQVLRHPFL (255 aa)). ATP is bound by residues 20–28 (LGKGGFASV) and Lys43. Asp139 acts as the Proton acceptor in catalysis. Positions 371-381 (TNNLAPFTSDS) are enriched in polar residues. The interval 371–390 (TNNLAPFTSDSDMIPSPVGE) is disordered. The 118-residue stretch at 390 to 507 (EKRLLMPPLE…ARFVGLVKSK (118 aa)) folds into the Cryptic POLO box 1 (CPB1) domain. Residues 508 to 611 (TPKITFFSSL…GRRPAADMHA (104 aa)) enclose the Cryptic POLO box 2 (CPB2) domain. The region spanning 669–748 (PIKRITVPEI…MPQLQMKLKC (80 aa)) is the POLO box domain.

Belongs to the protein kinase superfamily. Ser/Thr protein kinase family. CDC5/Polo subfamily. Homodimer. In terms of processing, ubiquitinated by the SCF(Slimb) ubiquitin ligase complex; leading to its degradation by the proteasome during interphase and regulating centriole number and ensuring the block to centriole reduplication.

It is found in the cytoplasm. The protein localises to the cytoskeleton. Its subcellular location is the microtubule organizing center. The protein resides in the centrosome. It localises to the centriole. The catalysed reaction is L-seryl-[protein] + ATP = O-phospho-L-seryl-[protein] + ADP + H(+). It carries out the reaction L-threonyl-[protein] + ATP = O-phospho-L-threonyl-[protein] + ADP + H(+). In terms of biological role, serine/threonine-protein kinase that plays a central role in centriole duplication. Able to trigger procentriole formation on the surface of the mother centriole cylinder, using mother centriole as a platform, leading to the recruitment of centriole biogenesis proteins such as sas-6. When overexpressed, it is able to induce centrosome amplification through the simultaneous generation of multiple procentrioles adjoining each parental centriole during S phase. Centrosome amplification following overexpression can initiate tumorigenesis, highlighting the importance of centrosome regulation in cancers. The protein is Serine/threonine-protein kinase PLK4 (SAK) of Drosophila persimilis (Fruit fly).